The sequence spans 491 residues: N-succinylglutamate 5-semialdehyde dehydrogenase (491 aa).

NAD(+) is bound at residue 223–228; it reads GSANTG. Active-site residues include glutamate 246 and cysteine 280.

Belongs to the aldehyde dehydrogenase family. AstD subfamily.

The catalysed reaction is N-succinyl-L-glutamate 5-semialdehyde + NAD(+) + H2O = N-succinyl-L-glutamate + NADH + 2 H(+). Its pathway is amino-acid degradation; L-arginine degradation via AST pathway; L-glutamate and succinate from L-arginine: step 4/5. In terms of biological role, catalyzes the NAD-dependent reduction of succinylglutamate semialdehyde into succinylglutamate. The chain is N-succinylglutamate 5-semialdehyde dehydrogenase from Photorhabdus laumondii subsp. laumondii (strain DSM 15139 / CIP 105565 / TT01) (Photorhabdus luminescens subsp. laumondii).